We begin with the raw amino-acid sequence, 230 residues long: tRNA (guanine-N(7)-)-methyltransferase (230 aa).

S-adenosyl-L-methionine is bound by residues Glu-61, Glu-86, Asp-113, and Asp-135. Residue Asp-135 is part of the active site. Residues Lys-139, Asp-171, and 209–212 (TRYE) contribute to the substrate site.

Belongs to the class I-like SAM-binding methyltransferase superfamily. TrmB family.

The catalysed reaction is guanosine(46) in tRNA + S-adenosyl-L-methionine = N(7)-methylguanosine(46) in tRNA + S-adenosyl-L-homocysteine. The protein operates within tRNA modification; N(7)-methylguanine-tRNA biosynthesis. Functionally, catalyzes the formation of N(7)-methylguanine at position 46 (m7G46) in tRNA. The polypeptide is tRNA (guanine-N(7)-)-methyltransferase (Azorhizobium caulinodans (strain ATCC 43989 / DSM 5975 / JCM 20966 / LMG 6465 / NBRC 14845 / NCIMB 13405 / ORS 571)).